We begin with the raw amino-acid sequence, 174 residues long: MKLSNKSQALYDMIAPAVEACGVDLWGIEFLPQGKRSLLRIYIDRTVDENAEPVINEDGEVEQGRGIGVEDCVRVTQQVGAMLDVHDPISGEYALEVSSPGWDRPFFQLEQLQGYIGQQVALRLIAAVENRRKFQAKLLAVDLENEEIQVEVEGKHVLDIDSNNIDKANLIYQD.

The protein belongs to the RimP family.

It is found in the cytoplasm. Functionally, required for maturation of 30S ribosomal subunits. This Acinetobacter baumannii (strain SDF) protein is Ribosome maturation factor RimP.